The chain runs to 86 residues: CLAVATA3/ESR (CLE)-related protein 8 (86 aa).

The signal sequence occupies residues 1–24; it reads MKVLKRDSMLLLITLYFLLTTSMA. Positions 43–86 are disordered; it reads DLKQNKAKPHLPNLFRTMRRVPTGPNPLHHISPPQPGSLNYARN. A hydroxyproline mark is found at P64 and P67. P67 carries an O-linked (Ara...) hydroxyproline glycan.

This sequence belongs to the CLV3/ESR signal peptide family. In terms of processing, the O-glycosylation (arabinosylation) of the hydroxyproline Pro-67 enhances binding affinity of the CLE8p peptide for its receptor. Mostly expressed in siliques, and, to a lower extent, in flowers. Expressed in young embryos and endosperm.

It localises to the secreted. The protein resides in the extracellular space. Functionally, extracellular signal peptide that regulates cell fate. Represses root apical meristem maintenance. Positively regulates the expression of the transcription factor WOX8 and thus, regulates early embryo development. Regulates the transition of protophloem cells from proliferation to differentiation, thus impinging on postembryonic growth capacity of the root meristem; this signaling pathway requires CRN and CLV2. The chain is CLAVATA3/ESR (CLE)-related protein 8 from Arabidopsis thaliana (Mouse-ear cress).